The primary structure comprises 290 residues: 4-hydroxybenzoate octaprenyltransferase (290 aa).

Transmembrane regions (helical) follow at residues 33 to 53, 99 to 119, 141 to 161, 163 to 183, 213 to 233, 237 to 257, and 268 to 288; these read LWAL…AVFV, LFVV…TMTI, LPQV…FAAV, ESVP…AVAY, FIIG…GWLN, WGYY…QKLI, and AFMN…MSYW.

This sequence belongs to the UbiA prenyltransferase family. It depends on Mg(2+) as a cofactor.

The protein localises to the cell inner membrane. The catalysed reaction is all-trans-octaprenyl diphosphate + 4-hydroxybenzoate = 4-hydroxy-3-(all-trans-octaprenyl)benzoate + diphosphate. Its pathway is cofactor biosynthesis; ubiquinone biosynthesis. In terms of biological role, catalyzes the prenylation of para-hydroxybenzoate (PHB) with an all-trans polyprenyl group. Mediates the second step in the final reaction sequence of ubiquinone-8 (UQ-8) biosynthesis, which is the condensation of the polyisoprenoid side chain with PHB, generating the first membrane-bound Q intermediate 3-octaprenyl-4-hydroxybenzoate. This chain is 4-hydroxybenzoate octaprenyltransferase, found in Escherichia fergusonii (strain ATCC 35469 / DSM 13698 / CCUG 18766 / IAM 14443 / JCM 21226 / LMG 7866 / NBRC 102419 / NCTC 12128 / CDC 0568-73).